A 346-amino-acid polypeptide reads, in one-letter code: Beta-ketoacyl-[acyl-carrier-protein] synthase III (346 aa).

Active-site residues include Cys120 and His256. Positions 257–261 are ACP-binding; sequence QANIR. The active site involves Asn286.

Belongs to the thiolase-like superfamily. FabH family. Homodimer.

The protein resides in the cytoplasm. It catalyses the reaction malonyl-[ACP] + acetyl-CoA + H(+) = 3-oxobutanoyl-[ACP] + CO2 + CoA. Its pathway is lipid metabolism; fatty acid biosynthesis. Catalyzes the condensation reaction of fatty acid synthesis by the addition to an acyl acceptor of two carbons from malonyl-ACP. Catalyzes the first condensation reaction which initiates fatty acid synthesis and may therefore play a role in governing the total rate of fatty acid production. Possesses both acetoacetyl-ACP synthase and acetyl transacylase activities. Its substrate specificity determines the biosynthesis of branched-chain and/or straight-chain of fatty acids. This chain is Beta-ketoacyl-[acyl-carrier-protein] synthase III, found in Deinococcus geothermalis (strain DSM 11300 / CIP 105573 / AG-3a).